The chain runs to 211 residues: MLTIALSKGRILDDTLPLLAEAGIVPTENPDKSRKLIIPTTQDDVRLLIVRATDVPTYVEHGAADLGVAGKDVLMEYGGQGLYEPLDLQIAQCKLMTAGVVGAAEPKGRLRVATKFVNVAKRYYAEQGRQVDIIKLYGSMELAPLINLADKIIDVVDTGNTLRANGLEPQELIATISSRLVVNKASMKMQHARIQSLIDTLRQAVESRHRG.

The protein belongs to the ATP phosphoribosyltransferase family. Short subfamily. Heteromultimer composed of HisG and HisZ subunits.

The protein resides in the cytoplasm. The catalysed reaction is 1-(5-phospho-beta-D-ribosyl)-ATP + diphosphate = 5-phospho-alpha-D-ribose 1-diphosphate + ATP. Its pathway is amino-acid biosynthesis; L-histidine biosynthesis; L-histidine from 5-phospho-alpha-D-ribose 1-diphosphate: step 1/9. In terms of biological role, catalyzes the condensation of ATP and 5-phosphoribose 1-diphosphate to form N'-(5'-phosphoribosyl)-ATP (PR-ATP). Has a crucial role in the pathway because the rate of histidine biosynthesis seems to be controlled primarily by regulation of HisG enzymatic activity. The chain is ATP phosphoribosyltransferase from Pseudomonas putida (strain ATCC 700007 / DSM 6899 / JCM 31910 / BCRC 17059 / LMG 24140 / F1).